Consider the following 236-residue polypeptide: Large ribosomal subunit protein uL3 (236 aa).

This sequence belongs to the universal ribosomal protein uL3 family. In terms of assembly, part of the 50S ribosomal subunit. Forms a cluster with proteins L14 and L19.

Functionally, one of the primary rRNA binding proteins, it binds directly near the 3'-end of the 23S rRNA, where it nucleates assembly of the 50S subunit. This chain is Large ribosomal subunit protein uL3, found in Anaeromyxobacter dehalogenans (strain 2CP-1 / ATCC BAA-258).